We begin with the raw amino-acid sequence, 401 residues long: Imidazolonepropionase (401 aa).

The Fe(3+) site is built by H70 and H72. Positions 70 and 72 each coordinate Zn(2+). 4-imidazolone-5-propanoate-binding residues include R79, Y142, and H175. Y142 is a binding site for N-formimidoyl-L-glutamate. Residue H238 coordinates Fe(3+). H238 contributes to the Zn(2+) binding site. Q241 contacts 4-imidazolone-5-propanoate. D313 provides a ligand contact to Fe(3+). Position 313 (D313) interacts with Zn(2+). Residues N315 and G317 each coordinate N-formimidoyl-L-glutamate. T318 serves as a coordination point for 4-imidazolone-5-propanoate.

Belongs to the metallo-dependent hydrolases superfamily. HutI family. The cofactor is Zn(2+). Fe(3+) serves as cofactor.

It is found in the cytoplasm. The enzyme catalyses 4-imidazolone-5-propanoate + H2O = N-formimidoyl-L-glutamate. It participates in amino-acid degradation; L-histidine degradation into L-glutamate; N-formimidoyl-L-glutamate from L-histidine: step 3/3. Catalyzes the hydrolytic cleavage of the carbon-nitrogen bond in imidazolone-5-propanoate to yield N-formimidoyl-L-glutamate. It is the third step in the universal histidine degradation pathway. The protein is Imidazolonepropionase of Acidiphilium cryptum (strain JF-5).